The sequence spans 221 residues: Glutathione S-transferase (221 aa).

An N-acetylmethionine modification is found at methionine 1. At alanine 2 the chain carries N-acetylalanine; in Glutathione S-transferase, N-terminally processed. Residues 3–82 (GEQNIKYFNI…YIAEKYNLLG (80 aa)) form the GST N-terminal domain. Glutathione-binding positions include tyrosine 9, lysine 45, 53 to 54 (QV), and 66 to 67 (QT). The 125-residue stretch at 84-208 (DMKEHAQIIM…PGSKRKPVPD (125 aa)) folds into the GST C-terminal domain.

This sequence belongs to the GST superfamily. Alpha family. Homodimer or heterodimer of GSTA1 and GSTA2.

Its subcellular location is the cytoplasm. The enzyme catalyses RX + glutathione = an S-substituted glutathione + a halide anion + H(+). It carries out the reaction prostaglandin A2 + glutathione = prostaglandin A2-S-(R)-glutathione. The catalysed reaction is prostaglandin J2 + glutathione = prostaglandin J2-S-(R)-glutathione. It catalyses the reaction (13S)-hydroperoxy-(9Z,11E)-octadecadienoate + 2 glutathione = (13S)-hydroxy-(9Z,11E)-octadecadienoate + glutathione disulfide + H2O. The enzyme catalyses androst-5-ene-3,17-dione = androst-4-ene-3,17-dione. Functionally, glutathione S-transferase that catalyzes the nucleophilic attack of the sulfur atom of glutathione on the electrophilic groups of a wide range of exogenous and endogenous compounds. Involved in the formation of glutathione conjugates of both prostaglandin A2 (PGA2) and prostaglandin J2 (PGJ2). It also catalyzes the isomerization of D5-androstene-3,17-dione (AD) into D4-androstene-3,17-dione and may therefore play an important role in hormone biosynthesis. Through its glutathione-dependent peroxidase activity toward the fatty acid hydroperoxide (13S)-hydroperoxy-(9Z,11E)-octadecadienoate/13-HPODE it is also involved in the metabolism of oxidized linoleic acid. This Antechinus stuartii (Brown marsupial mouse) protein is Glutathione S-transferase.